Reading from the N-terminus, the 368-residue chain is C-X-C chemokine receptor type 3 (368 aa).

The Extracellular segment spans residues methionine 1–arginine 53. N-linked (GlcNAc...) asparagine glycosylation occurs at asparagine 22. Tyrosine 27 and tyrosine 29 each carry sulfotyrosine. Asparagine 32 carries N-linked (GlcNAc...) asparagine glycosylation. A helical membrane pass occupies residues alanine 54–serine 80. Over arginine 81–aspartate 89 the chain is Cytoplasmic. Residues threonine 90–alanine 110 traverse the membrane as a helical segment. Residues valine 111 to lysine 125 lie on the Extracellular side of the membrane. An intrachain disulfide couples cysteine 124 to cysteine 203. A helical membrane pass occupies residues valine 126 to phenylalanine 147. At aspartate 148–threonine 169 the chain is on the cytoplasmic side. A helical transmembrane segment spans residues leucine 170–phenylalanine 189. At leucine 190–arginine 212 the chain is on the extracellular side. Residues threonine 213–tyrosine 233 traverse the membrane as a helical segment. Topologically, residues cysteine 234 to arginine 255 are cytoplasmic. The chain crosses the membrane as a helical span at residues leucine 256–valine 277. Over aspartate 278–valine 298 the chain is Extracellular. A helical membrane pass occupies residues alanine 299–valine 321. Topologically, residues glycine 322–leucine 368 are cytoplasmic. The interval arginine 342 to leucine 368 is disordered. The span at tryptophan 357–leucine 368 shows a compositional bias: low complexity.

It belongs to the G-protein coupled receptor 1 family. In terms of assembly, homomer. Forms heteromers with ACKR4. As to quaternary structure, interacts with PF4/CXCL4. In terms of processing, sulfation on Tyr-27 and Tyr-29 is essential for CXCL10 binding and subsequent signal transduction induction. Post-translationally, N-glycosylated. In terms of tissue distribution, isoform 1 and isoform 2 are mainly expressed in heart, kidney, liver and skeletal muscle. Isoform 1 is also expressed in placenta. Isoform 2 is expressed in endothelial cells. Expressed in T-cells (at protein level).

It localises to the cell membrane. Functionally, receptor for the C-X-C chemokine CXCL9, CXCL10 and CXCL11 and mediates the proliferation, survival and angiogenic activity of human mesangial cells (HMC) through a heterotrimeric G-protein signaling pathway. Binds to CCL21. Probably promotes cell chemotaxis response. Upon activation by PF4, induces activated T-lymphocytes migration mediated via downstream Ras/extracellular signal-regulated kinase (ERK) signaling. In terms of biological role, receptor for the C-X-C chemokine CXCL4 and also mediates the inhibitory activities of CXCL9, CXCL10 and CXCL11 on the proliferation, survival and angiogenic activity of human microvascular endothelial cells (HMVEC) through a cAMP-mediated signaling pathway. Does not promote cell chemotaxis respons. Interaction with CXCL4 or CXCL10 leads to activation of the p38MAPK pathway and contributes to inhibition of angiogenesis. Overexpression in renal cancer cells down-regulates expression of the anti-apoptotic protein HMOX1 and promotes apoptosis. Mediates the activity of CXCL11. This is C-X-C chemokine receptor type 3 (CXCR3) from Homo sapiens (Human).